A 77-amino-acid chain; its full sequence is Acyl carrier protein (77 aa).

One can recognise a Carrier domain in the interval 1–76; sequence MENFDKVKDI…DAVNFINNLE (76 aa). Ser-36 carries the post-translational modification O-(pantetheine 4'-phosphoryl)serine.

It belongs to the acyl carrier protein (ACP) family. In terms of processing, 4'-phosphopantetheine is transferred from CoA to a specific serine of apo-ACP by AcpS. This modification is essential for activity because fatty acids are bound in thioester linkage to the sulfhydryl of the prosthetic group.

It localises to the cytoplasm. Its pathway is lipid metabolism; fatty acid biosynthesis. Functionally, carrier of the growing fatty acid chain in fatty acid biosynthesis. The chain is Acyl carrier protein from Staphylococcus carnosus (strain TM300).